Here is a 152-residue protein sequence, read N- to C-terminus: Protein-export protein SecB (152 aa).

This sequence belongs to the SecB family. As to quaternary structure, homotetramer, a dimer of dimers. One homotetramer interacts with 1 SecA dimer.

It is found in the cytoplasm. One of the proteins required for the normal export of preproteins out of the cell cytoplasm. It is a molecular chaperone that binds to a subset of precursor proteins, maintaining them in a translocation-competent state. It also specifically binds to its receptor SecA. In Acinetobacter baumannii (strain AB307-0294), this protein is Protein-export protein SecB.